Here is a 513-residue protein sequence, read N- to C-terminus: Maturase K (513 aa).

This sequence belongs to the intron maturase 2 family. MatK subfamily.

Its subcellular location is the plastid. It localises to the chloroplast. In terms of biological role, usually encoded in the trnK tRNA gene intron. Probably assists in splicing its own and other chloroplast group II introns. This Phaseolus vulgaris (Kidney bean) protein is Maturase K.